A 244-amino-acid chain; its full sequence is Small ribosomal subunit protein uS3 (244 aa).

The region spanning Ile39–Lys107 is the KH type-2 domain. A disordered region spans residues Leu216–Asn244. Basic residues predominate over residues Lys220–Lys238.

Belongs to the universal ribosomal protein uS3 family. In terms of assembly, part of the 30S ribosomal subunit. Forms a tight complex with proteins S10 and S14.

Binds the lower part of the 30S subunit head. Binds mRNA in the 70S ribosome, positioning it for translation. This is Small ribosomal subunit protein uS3 from Finegoldia magna (strain ATCC 29328 / DSM 20472 / WAL 2508) (Peptostreptococcus magnus).